The sequence spans 502 residues: MSVRVRIAPSPTGDPHVGTAYMALFNMIFARHYNGTFILRIEDTDRARSRPEYEENIYSALKWANIQWDEGPDIGGAYGPYRQSERFDIYKQYAEELLSKGKAYKCFCTAAELDEMRELSAKQGGRQGYDRRCRHLTPDEIIEREQAELSYVIRLKVPLNGECVYEDAIKKRMTFPWADIDDQVLLKSDGFPTYHLANVVDDYLMKISHVIRGDEWMSSTPKHILLYESFGWTPPTFLHMPLLLGKDGKKLSKRKNPTSIFFYRDSGYLSEAFINFLTLMGYSMTGDQEIYSLDDIIREFDYKRIGVSGAIFDVQKLDWVNQQYLIKNIPVEQLWDRIKEWSFNDEFMQRLMPLCHSRIKTFGDFMDLFNFLFINHLHYNDAIFVVKDLSKEQICYLIQSLIWRLDELENWNGTGVNQASREIAEIFGVNHKKIVMPILFASLMSKTQGPPLFDSVNLLGKDRTRARLLKAMEYLGGISNKKMASLKKAWQEKSGQPLMIKD.

The 'HIGH' region signature appears at 9-19; it reads PSPTGDPHVGT. Residues Cys106, Cys108, Cys133, and His135 each coordinate Zn(2+). The 'KMSKS' region motif lies at 250-254; sequence KLSKR. An ATP-binding site is contributed by Lys253.

The protein belongs to the class-I aminoacyl-tRNA synthetase family. Glutamate--tRNA ligase type 1 subfamily. As to quaternary structure, monomer. Zn(2+) serves as cofactor.

It localises to the cytoplasm. It catalyses the reaction tRNA(Glu) + L-glutamate + ATP = L-glutamyl-tRNA(Glu) + AMP + diphosphate. Functionally, catalyzes the attachment of glutamate to tRNA(Glu) in a two-step reaction: glutamate is first activated by ATP to form Glu-AMP and then transferred to the acceptor end of tRNA(Glu). The chain is Glutamate--tRNA ligase from Protochlamydia amoebophila (strain UWE25).